A 189-amino-acid chain; its full sequence is uncharacterized protein (189 aa).

It belongs to the inositol monophosphatase superfamily.

This is an uncharacterized protein from Leptospira biflexa.